A 282-amino-acid chain; its full sequence is tRNA pseudouridine synthase A (282 aa).

Residue aspartate 53 is the Nucleophile of the active site. Tyrosine 119 is a binding site for substrate.

It belongs to the tRNA pseudouridine synthase TruA family. As to quaternary structure, homodimer.

It carries out the reaction uridine(38/39/40) in tRNA = pseudouridine(38/39/40) in tRNA. Its function is as follows. Formation of pseudouridine at positions 38, 39 and 40 in the anticodon stem and loop of transfer RNAs. The sequence is that of tRNA pseudouridine synthase A from Corynebacterium efficiens (strain DSM 44549 / YS-314 / AJ 12310 / JCM 11189 / NBRC 100395).